Reading from the N-terminus, the 263-residue chain is Hydroxyethylthiazole kinase (263 aa).

Met41 lines the substrate pocket. The ATP site is built by Lys117 and Ser163. A substrate-binding site is contributed by Gly190.

Belongs to the Thz kinase family. The cofactor is Mg(2+).

It carries out the reaction 5-(2-hydroxyethyl)-4-methylthiazole + ATP = 4-methyl-5-(2-phosphooxyethyl)-thiazole + ADP + H(+). It participates in cofactor biosynthesis; thiamine diphosphate biosynthesis; 4-methyl-5-(2-phosphoethyl)-thiazole from 5-(2-hydroxyethyl)-4-methylthiazole: step 1/1. In terms of biological role, catalyzes the phosphorylation of the hydroxyl group of 4-methyl-5-beta-hydroxyethylthiazole (THZ). The sequence is that of Hydroxyethylthiazole kinase from Thermoanaerobacter sp. (strain X514).